Consider the following 31-residue polypeptide: Zinc metalloproteinase alsophinase (31 aa).

Position 1 is a pyrrolidone carboxylic acid (glutamine 1). The Peptidase M12B domain occupies 9-31; sequence KYIEFYLVVDNGMFXKYSXXFTV. A Ca(2+)-binding site is contributed by glutamate 12.

In terms of assembly, monomer. Zn(2+) serves as cofactor. In terms of processing, contains 9 disulfide bonds. In terms of tissue distribution, expressed by the venom gland.

It localises to the secreted. Its activity is regulated as follows. Inhibited by 1,10-phenanthroline. Its function is as follows. Snake venom zinc metalloprotease that has potent hemorrhagic activity, fibrinogenolytic activity on the alpha-subunit of human fibrinogen (FGA) in vitro and provokes necrosis in skin, muscle and lung tissues. May contribute to local edema and ecchymosis induced by venom. Hydrolyzes model substrate (beta-chain of insulin) at Ala(14)-Leu(15). This Borikenophis portoricensis (Puerto Rican racer) protein is Zinc metalloproteinase alsophinase.